The primary structure comprises 349 residues: Core protein VP7 (349 aa).

An N-linked (GlcNAc...) asparagine; by host glycan is attached at N287.

It belongs to the orbivirus VP7 family. In terms of assembly, homotrimer that assemble in a complex of 260 capsomers on an inner scaffold composed of VP3.

The protein resides in the virion. Its function is as follows. The VP7 protein is one of the five proteins (with VP1, VP3, VP4, and VP6) which form the inner capsid of the virus. In Antilocapra americana (Pronghorn), this protein is Core protein VP7 (Segment-7).